Here is a 255-residue protein sequence, read N- to C-terminus: UDP-2,3-diacylglucosamine hydrolase (255 aa).

Mn(2+) is bound by residues Asp-8, His-10, Asp-41, Asn-79, and His-114. 79–80 (NR) contributes to the substrate binding site. Positions 122, 160, 164, 167, and 195 each coordinate substrate. The Mn(2+) site is built by His-195 and His-197.

It belongs to the LpxH family. Mn(2+) serves as cofactor.

The protein resides in the cell inner membrane. The catalysed reaction is UDP-2-N,3-O-bis[(3R)-3-hydroxytetradecanoyl]-alpha-D-glucosamine + H2O = 2-N,3-O-bis[(3R)-3-hydroxytetradecanoyl]-alpha-D-glucosaminyl 1-phosphate + UMP + 2 H(+). It functions in the pathway glycolipid biosynthesis; lipid IV(A) biosynthesis; lipid IV(A) from (3R)-3-hydroxytetradecanoyl-[acyl-carrier-protein] and UDP-N-acetyl-alpha-D-glucosamine: step 4/6. In terms of biological role, hydrolyzes the pyrophosphate bond of UDP-2,3-diacylglucosamine to yield 2,3-diacylglucosamine 1-phosphate (lipid X) and UMP by catalyzing the attack of water at the alpha-P atom. Involved in the biosynthesis of lipid A, a phosphorylated glycolipid that anchors the lipopolysaccharide to the outer membrane of the cell. The chain is UDP-2,3-diacylglucosamine hydrolase from Hamiltonella defensa subsp. Acyrthosiphon pisum (strain 5AT).